Consider the following 1007-residue polypeptide: Beta-galactosidase A (1007 aa).

Positions 1–18 are cleaved as a signal peptide; it reads MKLSSACAIALLAAQAAG. Residues Y96 and 140–142 contribute to the substrate site; that span reads NAE. N-linked (GlcNAc...) asparagine glycosylation is present at N156. Residue N199 participates in substrate binding. The Proton donor role is filled by E200. 2 disulfides stabilise this stretch: C205–C206 and C266–C315. E298 serves as the catalytic Nucleophile. Y364 is a substrate binding site. N-linked (GlcNAc...) asparagine glycosylation is found at N402, N422, N478, N522, N622, N739, N760, N777, N805, and N914.

Belongs to the glycosyl hydrolase 35 family.

The protein localises to the secreted. The catalysed reaction is Hydrolysis of terminal non-reducing beta-D-galactose residues in beta-D-galactosides.. In terms of biological role, cleaves beta-linked terminal galactosyl residues from gangliosides, glycoproteins, and glycosaminoglycans. The sequence is that of Beta-galactosidase A (lacA) from Aspergillus niger (strain ATCC MYA-4892 / CBS 513.88 / FGSC A1513).